The chain runs to 353 residues: N-methyltransferase (353 aa).

S-adenosyl-L-homocysteine-binding residues include serine 171, alanine 195, aspartate 218, aspartate 238, and lysine 252. Aspartate 218 lines the S-adenosyl-L-methionine pocket.

Belongs to the class I-like SAM-binding methyltransferase superfamily. Cation-independent O-methyltransferase family. As to quaternary structure, homodimer. As to expression, expressed at high levels in all tissues.

The enzyme catalyses 3-methoxytyramine + S-adenosyl-L-methionine = N-methyl-3-methoxytyramine + S-adenosyl-L-homocysteine + H(+). The catalysed reaction is mescaline + S-adenosyl-L-methionine = N-methylmescaline + S-adenosyl-L-homocysteine + H(+). It carries out the reaction tyramine + S-adenosyl-L-methionine = N-methyltyramine + S-adenosyl-L-homocysteine + H(+). It catalyses the reaction 4-hydroxy-3,5-dimethoxyphenethylamine + S-adenosyl-L-methionine = N-methyl-4-hydroxy-3,5-dimethoxyphenethylamine + S-adenosyl-L-homocysteine + H(+). It functions in the pathway aromatic compound metabolism. Its pathway is alkaloid biosynthesis. Functionally, N-methyltransferase participating in the biosynthesis of natural products derived from phenylethylamine, including mescaline, a natural hallucinogen potentially used in psychotherapeutic treatments. Catalyzes the N-methylation of many substrates, including 3-methoxytyramine, 5-hydroxy-3,4-dimethoxyphenethylamine, 4-hydroxy-3,5-dimethoxyphenethylamine, tyramine and mescaline. The sequence is that of N-methyltransferase from Lophophora williamsii (Peyote).